The chain runs to 246 residues: Indole-3-glycerol phosphate synthase (246 aa).

This sequence belongs to the TrpC family.

It carries out the reaction 1-(2-carboxyphenylamino)-1-deoxy-D-ribulose 5-phosphate + H(+) = (1S,2R)-1-C-(indol-3-yl)glycerol 3-phosphate + CO2 + H2O. It participates in amino-acid biosynthesis; L-tryptophan biosynthesis; L-tryptophan from chorismate: step 4/5. This is Indole-3-glycerol phosphate synthase from Sulfurisphaera tokodaii (strain DSM 16993 / JCM 10545 / NBRC 100140 / 7) (Sulfolobus tokodaii).